A 459-amino-acid polypeptide reads, in one-letter code: Interleukin-7 receptor subunit alpha (459 aa).

A signal peptide spans 1–20; that stretch reads MMALGRAFAIVFCLIQAVSG. The Extracellular portion of the chain corresponds to 21–239; that stretch reads ESGNAQDGDL…PEPKNQGGWD (219 aa). Cys42 and Cys57 are oxidised to a cystine. Asn60 is a glycosylation site (N-linked (GlcNAc...) asparagine). 2 cysteine pairs are disulfide-bonded: Cys74-Cys82 and Cys108-Cys118. N-linked (GlcNAc...) asparagine glycans are attached at residues Asn115 and Asn177. The 102-residue stretch at 131 to 232 folds into the Fibronectin type-III domain; the sequence is APSDLKVVYR…PSSTFETPEP (102 aa). The WSXWS motif motif lies at 218–222; sequence WSEWS. Residues 240-264 form a helical membrane-spanning segment; it reads PVLPSVTILSLFSVFLLVILAHVLW. Residues 265–459 lie on the Cytoplasmic side of the membrane; it reads KKRIKPVVWP…VTMSSFYQNK (195 aa). Positions 272–280 match the Box 1 motif motif; it reads VWPSLPDHK. Phosphothreonine; by PKC is present on Thr282. Disordered stretches follow at residues 337-365 and 378-413; these read TQGH…RRES and NAPP…NTNV. Over residues 347-357 the composition is skewed to polar residues; the sequence is ANRSPETSVSP. Residues 388-397 show a composition bias toward basic and acidic residues; it reads PDYRDGDRNR.

It belongs to the type I cytokine receptor family. Type 4 subfamily. The IL7 receptor is a heterodimer of IL7R and IL2RG. The TSLP receptor is a heterodimer of CRLF2 and IL7R. Interacts with CD53. Post-translationally, N-glycosylated IL-7Ralpha binds IL7 300-fold more tightly than the unglycosylated form. Ubiquitinated by MARCHF8; leading to lysosomal degradation. As to expression, spleen, thymus and fetal liver.

It localises to the membrane. In terms of biological role, receptor for interleukin-7. Also acts as a receptor for thymic stromal lymphopoietin (TSLP). This chain is Interleukin-7 receptor subunit alpha (Il7r), found in Mus musculus (Mouse).